The primary structure comprises 544 residues: Chaperonin GroEL (544 aa).

Residues 30–33 (TLGP), lysine 51, 87–91 (DGTTT), glycine 415, and aspartate 495 each bind ATP.

Belongs to the chaperonin (HSP60) family. In terms of assembly, forms a cylinder of 14 subunits composed of two heptameric rings stacked back-to-back. Interacts with the co-chaperonin GroES.

Its subcellular location is the cytoplasm. It catalyses the reaction ATP + H2O + a folded polypeptide = ADP + phosphate + an unfolded polypeptide.. Functionally, together with its co-chaperonin GroES, plays an essential role in assisting protein folding. The GroEL-GroES system forms a nano-cage that allows encapsulation of the non-native substrate proteins and provides a physical environment optimized to promote and accelerate protein folding. The chain is Chaperonin GroEL from Neisseria meningitidis serogroup B (strain ATCC BAA-335 / MC58).